The following is an 820-amino-acid chain: Penicillin-binding protein 1A (820 aa).

The disordered stretch occupies residues 1–120 (MNSDGRHHQS…PAGRLPQPRV (120 aa)). The span at 41 to 53 (TDDRSAPHADSIE) shows a compositional bias: basic and acidic residues. The helical transmembrane segment at 139–159 (LTAAVVILLPMVTFTMAYLIV) threads the bilayer. Residues 180–360 (GSEIAKIVPP…RWNWVLDGMV (181 aa)) form a transglycosylase region. Glu-213 acts as the Proton donor; for transglycosylase activity in catalysis. A transpeptidase region spans residues 453-743 (AVVSIDPHNG…PSDIWKATMD (291 aa)). Ser-487 acts as the Acyl-ester intermediate; for transpeptidase activity in catalysis. Residues 792–804 (ITIPIGPPTTITL) are compositionally biased toward low complexity. Residues 792–820 (ITIPIGPPTTITLAPPPPAPPAATPTPPP) form a disordered region. The span at 805–820 (APPPPAPPAATPTPPP) shows a compositional bias: pro residues.

It in the N-terminal section; belongs to the glycosyltransferase 51 family. The protein in the C-terminal section; belongs to the transpeptidase family. As to quaternary structure, interacts with RipA via its transpeptidase domain (residues 561-820).

Its subcellular location is the cell membrane. The enzyme catalyses [GlcNAc-(1-&gt;4)-Mur2Ac(oyl-L-Ala-gamma-D-Glu-L-Lys-D-Ala-D-Ala)](n)-di-trans,octa-cis-undecaprenyl diphosphate + beta-D-GlcNAc-(1-&gt;4)-Mur2Ac(oyl-L-Ala-gamma-D-Glu-L-Lys-D-Ala-D-Ala)-di-trans,octa-cis-undecaprenyl diphosphate = [GlcNAc-(1-&gt;4)-Mur2Ac(oyl-L-Ala-gamma-D-Glu-L-Lys-D-Ala-D-Ala)](n+1)-di-trans,octa-cis-undecaprenyl diphosphate + di-trans,octa-cis-undecaprenyl diphosphate + H(+). The catalysed reaction is Preferential cleavage: (Ac)2-L-Lys-D-Ala-|-D-Ala. Also transpeptidation of peptidyl-alanyl moieties that are N-acyl substituents of D-alanine.. The protein operates within cell wall biogenesis; peptidoglycan biosynthesis. Functionally, cell wall formation. Synthesis of cross-linked peptidoglycan from the lipid intermediates. The enzyme has a penicillin-insensitive transglycosylase N-terminal domain (formation of linear glycan strands) and a penicillin-sensitive transpeptidase C-terminal domain (cross-linking of the peptide subunits). Has little peptidoglycan hydrolytic activity; however it inhibits the synergistic peptidoglycan hydrolysis of RipA plus RpfB. The chain is Penicillin-binding protein 1A (ponA1) from Mycobacterium tuberculosis (strain ATCC 25618 / H37Rv).